The following is a 205-amino-acid chain: StAR-related lipid transfer protein 4 (205 aa).

The START domain maps to 1-205; that stretch reads MEGLSDVASF…NFYGDLRKAL (205 aa).

It carries out the reaction cholesterol(in) = cholesterol(out). In terms of biological role, involved in the intracellular transport of cholesterol. Binds cholesterol or other sterols. The protein is StAR-related lipid transfer protein 4 (STARD4) of Homo sapiens (Human).